The following is a 378-amino-acid chain: MEVKPPPGRPQPDSGRRRRRRGEEGHDPKEPEQLRKLFIGGLSFETTDDSLREHFEKWGTLTDCVVMRDPQTKRSRGFGFVTYSCVEEVDAAMCARPHKVDGRVVEPKRAVSREDSVKPGAHLTVKKIFVGGIKEDTEEYNLRDYFEKYGKIETIEVMEDRQSGKKRGFAFVTFDDHDTVDKIVVQKYHTINGHNCEVKKALSKQEMQSAGSQRGRGGGSGNFMGRGGNFGGGGGNFGRGGNFGGRGGYGGGGGGSRGSYGGGDGGYNGFGGDGGNYGGGPGYSSRGGYGGGGPGYGNQGGGYGGGGGYDGYNEGGNFGGGNYGGGGNYNDFGNYSGQQQSNYGPMKGGSFGGRSSGSPYGGGYGSGGGSGGYGSRRF.

At methionine 1 the chain carries N-acetylmethionine. A compositionally biased stretch (pro residues) spans 1 to 10 (MEVKPPPGRP). The disordered stretch occupies residues 1–34 (MEVKPPPGRPQPDSGRRRRRRGEEGHDPKEPEQL). Lysine 4 participates in a covalent cross-link: Glycyl lysine isopeptide (Lys-Gly) (interchain with G-Cter in SUMO2). A Phosphoserine modification is found at serine 14. Residues 21-34 (RGEEGHDPKEPEQL) show a composition bias toward basic and acidic residues. The region spanning 35-118 (RKLFIGGLSF…RAVSREDSVK (84 aa)) is the RRM 1 domain. Lysine 36 participates in a covalent cross-link: Glycyl lysine isopeptide (Lys-Gly) (interchain with G-Cter in SUMO2). Phosphoserine is present on serine 43. Arginine 52 is modified (dimethylated arginine; alternate). Arginine 52 carries the omega-N-methylarginine; alternate modification. At arginine 76 the chain carries Omega-N-methylarginine. Serine 112 and serine 116 each carry phosphoserine. Lysine 118 is covalently cross-linked (Glycyl lysine isopeptide (Lys-Gly) (interchain with G-Cter in SUMO2)). Threonine 124 bears the Phosphothreonine mark. The 80-residue stretch at 126–205 (KKIFVGGIKE…CEVKKALSKQ (80 aa)) folds into the RRM 2 domain. Lysine 134 carries the post-translational modification N6-acetyllysine; alternate. Lysine 134 is covalently cross-linked (Glycyl lysine isopeptide (Lys-Gly) (interchain with G-Cter in SUMO2); alternate). Residues lysine 151 and lysine 182 each participate in a glycyl lysine isopeptide (Lys-Gly) (interchain with G-Cter in SUMO2) cross-link. Residues 204–225 (KQEMQSAGSQRGRGGGSGNFMG) form a disordered region. 5 positions are modified to omega-N-methylarginine; alternate: arginine 214, arginine 216, arginine 226, arginine 239, and arginine 246. Asymmetric dimethylarginine; alternate occurs at positions 214, 216, 226, 239, and 246. The span at 214 to 225 (RGRGGGSGNFMG) shows a compositional bias: gly residues. Position 257 is an omega-N-methylarginine (arginine 257). Asymmetric dimethylarginine is present on arginine 286. Residues 336 to 378 (SGQQQSNYGPMKGGSFGGRSSGSPYGGGYGSGGGSGGYGSRRF) form a disordered region. Positions 346 to 378 (MKGGSFGGRSSGSPYGGGYGSGGGSGGYGSRRF) are enriched in gly residues. The residue at position 350 (serine 350) is a Phosphoserine. Arginine 354 is modified (omega-N-methylarginine). The residue at position 358 (serine 358) is a Phosphoserine. 2 positions are modified to phosphotyrosine: tyrosine 360 and tyrosine 364. 2 positions are modified to phosphoserine: serine 366 and serine 370. A Phosphotyrosine modification is found at tyrosine 373. Phosphoserine is present on serine 375.

In terms of assembly, identified in the spliceosome C complex.

It localises to the nucleus. Plays a role in cytoplasmic trafficking of RNA. Binds to the cis-acting response element, A2RE. May be involved in pre-mRNA splicing. The chain is Heterogeneous nuclear ribonucleoprotein A3 (HNRNPA3) from Homo sapiens (Human).